Reading from the N-terminus, the 99-residue chain is uncharacterized protein (99 aa).

This is an uncharacterized protein from Mycobacterium tuberculosis (strain CDC 1551 / Oshkosh).